Consider the following 489-residue polypeptide: MSVFGLQRLYIGGGYVDATSGKTFDTFDPATGELLAQVQQASAADVDRAVASAQEGQREWAAMTAMQRSRILRRAVDLLRERNDELAALETRDTGKPIGETLAVDIVTGADVIEYYAGLATAIEGLQVPLRAESFVYTRREPLGVCAGIGAWNYPIQIACWKTAPALAAGNAMVFKPSEVTPLTALKLAEIYTEAGVPAGVFNVVQGDGSVGALLTGHPDIAKVSFTGGVETGKKVMSLAGASSLKEVTMELGGKSPLIVFDDADLDRAADIAVTANFFSSGQVCTNGTRVFVHRSIKDAFTQRVLERVKRIRVGKPTDADTNFGPLVSAAQLDKVLGFIESGKAEGAKLLAGGTRLTDGHFGSGQYVAPTVFGDCRDDMKIVREEIFGPVMSILDFESEDEVIARANDTHYGLAAGVVTENLSRAHRTIHRLEAGICWINTWGESPAEMPVGGYKQSGVGRENGITTLEHYTRIKSVQVELGRYNPVF.

2 residues coordinate K(+): T26 and D93. NAD(+) is bound at residue 150 to 152 (GAW). Catalysis depends on K162, which acts as the Charge relay system. Residue 176–179 (KPSE) participates in NAD(+) binding. V180 contacts K(+). 229-232 (GVET) is a binding site for NAD(+). Position 245 (L245) interacts with K(+). E251 acts as the Proton acceptor in catalysis. NAD(+) is bound by residues G253, C285, and E386. C285 acts as the Nucleophile in catalysis. The residue at position 285 (C285) is a Cysteine sulfenic acid (-SOH). 2 residues coordinate K(+): K456 and G459. E463 (charge relay system) is an active-site residue.

This sequence belongs to the aldehyde dehydrogenase family. Dimer of dimers. K(+) serves as cofactor.

The enzyme catalyses betaine aldehyde + NAD(+) + H2O = glycine betaine + NADH + 2 H(+). Its pathway is amine and polyamine biosynthesis; betaine biosynthesis via choline pathway; betaine from betaine aldehyde: step 1/1. Its function is as follows. Involved in the biosynthesis of the osmoprotectant glycine betaine. Catalyzes the irreversible oxidation of betaine aldehyde to the corresponding acid. The protein is Betaine aldehyde dehydrogenase of Burkholderia lata (strain ATCC 17760 / DSM 23089 / LMG 22485 / NCIMB 9086 / R18194 / 383).